The sequence spans 151 residues: UPF0178 protein PFLU_5917 (151 aa).

It belongs to the UPF0178 family.

The chain is UPF0178 protein PFLU_5917 from Pseudomonas fluorescens (strain SBW25).